A 246-amino-acid chain; its full sequence is MSGHNKWSSIKHKKGAADAKRGKVFTKLIKEITLAARTGGGDPDGNPRLRTAIAAAKDENMPKDNIERAIKKGTGDLEGVNYEENTYEGYGPGGAAVLVESLTDNKNRAVSEIRHIFSKHNGNMGENGCVAWMFDKKGYIEVEKSAAEEDHLMEVAIEAGAEDVRESDDTFEVITEVEDLETVRQALDGASIQYAFAEITMLPQTMVDLDDKTSEQMIRLLDALDDCEDVQKVYTNASLSDSVGEA.

The protein belongs to the TACO1 family.

The protein resides in the cytoplasm. In Desulfosudis oleivorans (strain DSM 6200 / JCM 39069 / Hxd3) (Desulfococcus oleovorans), this protein is Probable transcriptional regulatory protein Dole_0371.